Here is a 284-residue protein sequence, read N- to C-terminus: Pantothenate synthetase (284 aa).

30–37 (MGNLHQGH) provides a ligand contact to ATP. Catalysis depends on His37, which acts as the Proton donor. Residue Gln61 participates in (R)-pantoate binding. Gln61 lines the beta-alanine pocket. 149-152 (GQKD) is an ATP binding site. Gln155 provides a ligand contact to (R)-pantoate. ATP-binding positions include Val178 and 186–189 (LSSR).

This sequence belongs to the pantothenate synthetase family. As to quaternary structure, homodimer.

It is found in the cytoplasm. It carries out the reaction (R)-pantoate + beta-alanine + ATP = (R)-pantothenate + AMP + diphosphate + H(+). The protein operates within cofactor biosynthesis; (R)-pantothenate biosynthesis; (R)-pantothenate from (R)-pantoate and beta-alanine: step 1/1. Functionally, catalyzes the condensation of pantoate with beta-alanine in an ATP-dependent reaction via a pantoyl-adenylate intermediate. The chain is Pantothenate synthetase from Aeromonas salmonicida (strain A449).